Here is a 273-residue protein sequence, read N- to C-terminus: HTH-type transcriptional activator RhaS (273 aa).

Residues 174–272 (YQLLDWLQNN…SQSPRDLRSQ (99 aa)) form the HTH araC/xylS-type domain. 2 DNA-binding regions (H-T-H motif) span residues 191–212 (PELADRFALPLRTLHRQLKNKT) and 239–262 (VTDIAYLCGFGDSNHFSTLFKREF).

In terms of assembly, binds DNA as a dimer.

Its subcellular location is the cytoplasm. In terms of biological role, activates expression of the rhaBAD and rhaT operons. This chain is HTH-type transcriptional activator RhaS, found in Yersinia pestis bv. Antiqua (strain Antiqua).